The primary structure comprises 219 residues: LexA repressor (219 aa).

A DNA-binding region (H-T-H motif) is located at residues 28–48; the sequence is RAEIAAELGFRSANAAEEHLQ. Active-site for autocatalytic cleavage activity residues include S138 and K175.

It belongs to the peptidase S24 family. In terms of assembly, homodimer.

The enzyme catalyses Hydrolysis of Ala-|-Gly bond in repressor LexA.. Its function is as follows. Represses a number of genes involved in the response to DNA damage (SOS response), including recA and lexA. In the presence of single-stranded DNA, RecA interacts with LexA causing an autocatalytic cleavage which disrupts the DNA-binding part of LexA, leading to derepression of the SOS regulon and eventually DNA repair. This chain is LexA repressor, found in Herminiimonas arsenicoxydans.